A 907-amino-acid chain; its full sequence is DNA ligase 4 (907 aa).

ATP-binding residues include Glu-273, Lys-275, Arg-280, Glu-333, Phe-378, Glu-438, Lys-443, Lys-460, and Lys-462. The active-site N6-AMP-lysine intermediate is the Lys-275. Position 333 (Glu-333) interacts with Mg(2+). Residue Glu-438 coordinates Mg(2+). BRCT domains lie at 655–754 and 800–906; these read PVSN…ESDI and VPLF…HYQC.

The protein belongs to the ATP-dependent DNA ligase family. It depends on Mg(2+) as a cofactor.

It localises to the nucleus. The enzyme catalyses ATP + (deoxyribonucleotide)n-3'-hydroxyl + 5'-phospho-(deoxyribonucleotide)m = (deoxyribonucleotide)n+m + AMP + diphosphate.. In terms of biological role, DNA ligase involved in DNA non-homologous end joining (NHEJ); required for double-strand break (DSB) repair. In Kluyveromyces lactis (strain ATCC 8585 / CBS 2359 / DSM 70799 / NBRC 1267 / NRRL Y-1140 / WM37) (Yeast), this protein is DNA ligase 4 (LIG4).